The following is a 74-amino-acid chain: UPF0352 protein HAPS_0210 (74 aa).

Belongs to the UPF0352 family.

This Glaesserella parasuis serovar 5 (strain SH0165) (Haemophilus parasuis) protein is UPF0352 protein HAPS_0210.